Reading from the N-terminus, the 198-residue chain is NAD(P)H quinone oxidoreductase PST1 (198 aa).

Positions Val-6–Phe-192 constitute a Flavodoxin-like domain. Residues Ser-12 to His-16 and Val-112 to Gly-164 each bind FMN.

It belongs to the WrbA family. FMN serves as cofactor.

Its subcellular location is the cell membrane. It carries out the reaction a quinone + NADH + H(+) = a quinol + NAD(+). The enzyme catalyses a quinone + NADPH + H(+) = a quinol + NADP(+). Its function is as follows. Flavodoxin-like protein (FLP) that plays a role in cell wall integrity, oxidative stress protection and virulence. FLPs act as NAD(P)H quinone oxidoreductases. Reduces ubiquinone (coenzyme Q), enabling it to serve as an antioxidant in the membrane. The chain is NAD(P)H quinone oxidoreductase PST1 from Candida albicans (strain SC5314 / ATCC MYA-2876) (Yeast).